Here is a 191-residue protein sequence, read N- to C-terminus: dCTP deaminase (191 aa).

Residues 112–117 (KSTYAR), 136–138 (TLE), Gln-157, Tyr-173, and Gln-183 each bind dCTP. Glu-138 (proton donor/acceptor) is an active-site residue.

The protein belongs to the dCTP deaminase family. Homotrimer.

The enzyme catalyses dCTP + H2O + H(+) = dUTP + NH4(+). Its pathway is pyrimidine metabolism; dUMP biosynthesis; dUMP from dCTP (dUTP route): step 1/2. Catalyzes the deamination of dCTP to dUTP. In Xylella fastidiosa (strain 9a5c), this protein is dCTP deaminase.